The chain runs to 145 residues: Bacilliredoxin BrxB (145 aa).

Active-site nucleophile residues include Cys52 and Cys54. At Cys52 the chain carries S-bacillithiol cysteine disulfide. A CXC active site motif motif is present at residues 52–54 (CGC). A disulfide bond links Cys52 and Cys54.

It belongs to the bacilliredoxin family. In terms of assembly, interacts with BrxC. Post-translationally, N-terminal Cys of the CXC active site motif can react with bacillithiol (BSH) to form mixed disulfides. S-bacillithiolation protects Cys residues against overoxidation by acting as a redox switch in response to oxidative stress.

Functionally, S-bacillithiolation is the formation of mixed disulfide bonds between protein thiols and the general thiol reductant bacillithiol (BSH) under oxidative stress. BSH is an equivalent of glutathione (GSH) in Firmicutes. This protein is a dithiol bacilliredoxin, which debacillithiolates (removes BSH) the S-bacillithiolated OhrR (OhrR-SSB) in vitro and in vivo NaOCl-generated S-bacillithiolated MetE (MetE-SSB). Involved in maintaining redox homeostasis in response to disulfide stress conditions. The sequence is that of Bacilliredoxin BrxB from Bacillus subtilis (strain 168).